The following is a 473-amino-acid chain: Photosystem II CP43 reaction center protein (473 aa).

Residues 1–14 (MKTLYSPRRFYPVE) constitute a propeptide that is removed on maturation. Thr15 is subject to N-acetylthreonine. Residue Thr15 is modified to Phosphothreonine. Helical transmembrane passes span 69–93 (LFEV…PHLA), 134–155 (LIGP…KDRN), 178–200 (KALF…RKIT), 255–275 (KPFA…LSYS), and 291–312 (WFNN…ASQA). Residue Glu367 coordinates [CaMn4O5] cluster. The chain crosses the membrane as a helical span at residues 447–471 (RARAAAAGFEKGIDRDLEPVLFMTP).

Belongs to the PsbB/PsbC family. PsbC subfamily. In terms of assembly, PSII is composed of 1 copy each of membrane proteins PsbA, PsbB, PsbC, PsbD, PsbE, PsbF, PsbH, PsbI, PsbJ, PsbK, PsbL, PsbM, PsbT, PsbX, PsbY, PsbZ, Psb30/Ycf12, at least 3 peripheral proteins of the oxygen-evolving complex and a large number of cofactors. It forms dimeric complexes. Binds multiple chlorophylls and provides some of the ligands for the Ca-4Mn-5O cluster of the oxygen-evolving complex. It may also provide a ligand for a Cl- that is required for oxygen evolution. PSII binds additional chlorophylls, carotenoids and specific lipids. serves as cofactor.

The protein resides in the plastid. Its subcellular location is the chloroplast thylakoid membrane. Functionally, one of the components of the core complex of photosystem II (PSII). It binds chlorophyll and helps catalyze the primary light-induced photochemical processes of PSII. PSII is a light-driven water:plastoquinone oxidoreductase, using light energy to abstract electrons from H(2)O, generating O(2) and a proton gradient subsequently used for ATP formation. The sequence is that of Photosystem II CP43 reaction center protein from Gnetum parvifolium (Small-leaved jointfir).